A 189-amino-acid polypeptide reads, in one-letter code: Peptidyl-tRNA hydrolase (189 aa).

Residue Tyr-14 coordinates tRNA. Residue His-19 is the Proton acceptor of the active site. Positions 64, 66, and 112 each coordinate tRNA.

The protein belongs to the PTH family. As to quaternary structure, monomer.

It localises to the cytoplasm. It catalyses the reaction an N-acyl-L-alpha-aminoacyl-tRNA + H2O = an N-acyl-L-amino acid + a tRNA + H(+). Its function is as follows. Hydrolyzes ribosome-free peptidyl-tRNAs (with 1 or more amino acids incorporated), which drop off the ribosome during protein synthesis, or as a result of ribosome stalling. Functionally, catalyzes the release of premature peptidyl moieties from peptidyl-tRNA molecules trapped in stalled 50S ribosomal subunits, and thus maintains levels of free tRNAs and 50S ribosomes. This Clostridium botulinum (strain ATCC 19397 / Type A) protein is Peptidyl-tRNA hydrolase.